Here is a 395-residue protein sequence, read N- to C-terminus: Probable L-tyrosine/L-aspartate decarboxylase (395 aa).

N6-(pyridoxal phosphate)lysine is present on Lys-242.

Belongs to the group II decarboxylase family. MfnA subfamily. It depends on pyridoxal 5'-phosphate as a cofactor.

The enzyme catalyses L-tyrosine + H(+) = tyramine + CO2. It carries out the reaction L-aspartate + H(+) = beta-alanine + CO2. It functions in the pathway cofactor biosynthesis; methanofuran biosynthesis. Its pathway is cofactor biosynthesis; coenzyme A biosynthesis. Catalyzes the decarboxylation of L-tyrosine to produce tyramine for methanofuran biosynthesis. Can also catalyze the decarboxylation of L-aspartate to produce beta-alanine for coenzyme A (CoA) biosynthesis. The protein is Probable L-tyrosine/L-aspartate decarboxylase of Methanosarcina acetivorans (strain ATCC 35395 / DSM 2834 / JCM 12185 / C2A).